We begin with the raw amino-acid sequence, 106 residues long: PAT complex subunit Asterix (106 aa).

Residues 1 to 10 (MSANSMSDPR) show a composition bias toward polar residues. The segment at 1–29 (MSANSMSDPRSPNKVLRYKPPPSECNPAL) is disordered. S2 is subject to N-acetylserine. Residues 2–32 (SANSMSDPRSPNKVLRYKPPPSECNPALDDP) are Cytoplasmic-facing. A helical transmembrane segment spans residues 33-51 (TPDYMNLLGMIFSMCGLML). Residue K52 is a topological domain, lumenal. Residues 53–70 (LKWCAWVAVYCSFISFAN) traverse the membrane as a helical segment. The Cytoplasmic portion of the chain corresponds to 71–74 (SRSS). A helical membrane pass occupies residues 75–95 (EDTKQMMSSFMLSISAVVMSY). At 96 to 106 (LQNPQPMTPPW) the chain is on the lumenal side.

Belongs to the Asterix family. In terms of assembly, component of the PAT complex, composed of WDR83OS/Asterix and CCDC47. The PAT complex is part of the multi-pass translocon (MPT) complex, composed of three subcomplexes, the GEL complex (composed of RAB5IF/OPTI and TMCO1), the BOS complex (composed of NCLN/Nicalin, NOMO1 and TMEM147) and the PAT complex (composed of WDR83OS/Asterix and CCDC47). The MPT complex associates with the SEC61 complex.

The protein resides in the endoplasmic reticulum membrane. Its function is as follows. Component of the multi-pass translocon (MPT) complex that mediates insertion of multi-pass membrane proteins into the lipid bilayer of membranes. The MPT complex takes over after the SEC61 complex: following membrane insertion of the first few transmembrane segments of proteins by the SEC61 complex, the MPT complex occludes the lateral gate of the SEC61 complex to promote insertion of subsequent transmembrane regions. Within the MPT complex, the PAT subcomplex sequesters any highly polar regions in the transmembrane domains away from the non-polar membrane environment until they can be buried in the interior of the fully assembled protein. Within the PAT subcomplex, WDR83OS/Asterix binds to and redirects the substrate to a location behind the SEC61 complex. In Sus scrofa (Pig), this protein is PAT complex subunit Asterix (WDR83OS).